The primary structure comprises 703 residues: FERM domain-containing protein 7 (703 aa).

An FERM domain is found at 2 to 282; that stretch reads LHLKVQFLDD…EYHAFFRLSE (281 aa). Residues 525 to 552 adopt a coiled-coil conformation; that stretch reads RNMRIKSLQQDLQELQEAMARTSGRSNI.

In terms of tissue distribution, in the developing cerebral cortex, strong expression is observed in the ventricular and intermediate zones at 13 and 17 dpc. At 17 dpc and P0, expression appears to be restricted to the cortical plate. In neonates, highly expressed in cortex, hippocampus, cerebellum, olfactory bulb and eye with little or no expression in liver, kidney, skeletal muscle or heart muscle (at protein level).

Its subcellular location is the cell projection. It localises to the neuron projection. It is found in the growth cone. Plays a role in neurite development, may be through the activation of the GTPase RAC1. Plays a role in the control of eye movement and gaze stability. The chain is FERM domain-containing protein 7 from Mus musculus (Mouse).